Consider the following 421-residue polypeptide: UDP-N-acetylglucosamine 1-carboxyvinyltransferase 1 (421 aa).

A phosphoenolpyruvate-binding site is contributed by 22-23 (KN). R95 is a UDP-N-acetyl-alpha-D-glucosamine binding site. C119 (proton donor) is an active-site residue. C119 carries the post-translational modification 2-(S-cysteinyl)pyruvic acid O-phosphothioketal. UDP-N-acetyl-alpha-D-glucosamine-binding positions include 124-128 (RPIEQ), D308, and V330.

Belongs to the EPSP synthase family. MurA subfamily.

It localises to the cytoplasm. It carries out the reaction phosphoenolpyruvate + UDP-N-acetyl-alpha-D-glucosamine = UDP-N-acetyl-3-O-(1-carboxyvinyl)-alpha-D-glucosamine + phosphate. It participates in cell wall biogenesis; peptidoglycan biosynthesis. In terms of biological role, cell wall formation. Adds enolpyruvyl to UDP-N-acetylglucosamine. The protein is UDP-N-acetylglucosamine 1-carboxyvinyltransferase 1 of Staphylococcus aureus (strain MW2).